We begin with the raw amino-acid sequence, 241 residues long: Probable transcriptional regulatory protein CV_3123 (241 aa).

Belongs to the TACO1 family.

The protein resides in the cytoplasm. The sequence is that of Probable transcriptional regulatory protein CV_3123 from Chromobacterium violaceum (strain ATCC 12472 / DSM 30191 / JCM 1249 / CCUG 213 / NBRC 12614 / NCIMB 9131 / NCTC 9757 / MK).